The chain runs to 358 residues: Flap endonuclease 1 (358 aa).

Residues 1–103 (MGIKRLSKLI…HEFEKRTKRR (103 aa)) are N-domain. Asp34 serves as a coordination point for Mg(2+). Arg47 and Arg69 together coordinate DNA. Mg(2+) is bound by residues Asp85, Glu157, Glu159, Asp178, and Asp180. Positions 121-252 (LVSKYDRMNV…KRAFEYIKKY (132 aa)) are I-domain. Glu157 is a DNA binding site. Residues Gly230 and Asp232 each contribute to the DNA site. A Mg(2+)-binding site is contributed by Asp232. An interaction with PCNA region spans residues 346 to 354 (KQTRIDSFF).

This sequence belongs to the XPG/RAD2 endonuclease family. FEN1 subfamily. Interacts with PCNA. Three molecules of FEN1 bind to one PCNA trimer with each molecule binding to one PCNA monomer. PCNA stimulates the nuclease activity without altering cleavage specificity. It depends on Mg(2+) as a cofactor. Post-translationally, phosphorylated. Phosphorylation upon DNA damage induces relocalization to the nuclear plasma.

Its subcellular location is the nucleus. It localises to the nucleolus. The protein localises to the nucleoplasm. The protein resides in the mitochondrion. Functionally, structure-specific nuclease with 5'-flap endonuclease and 5'-3' exonuclease activities involved in DNA replication and repair. During DNA replication, cleaves the 5'-overhanging flap structure that is generated by displacement synthesis when DNA polymerase encounters the 5'-end of a downstream Okazaki fragment. It enters the flap from the 5'-end and then tracks to cleave the flap base, leaving a nick for ligation. Also involved in the long patch base excision repair (LP-BER) pathway, by cleaving within the apurinic/apyrimidinic (AP) site-terminated flap. Acts as a genome stabilization factor that prevents flaps from equilibrating into structures that lead to duplications and deletions. Also possesses 5'-3' exonuclease activity on nicked or gapped double-stranded DNA, and exhibits RNase H activity. Also involved in replication and repair of rDNA and in repairing mitochondrial DNA. This is Flap endonuclease 1 from Enterocytozoon bieneusi (strain H348) (Microsporidian parasite).